The sequence spans 375 residues: Growth/differentiation factor 8 (375 aa).

The signal sequence occupies residues 1-23 (MQKLAVYVYIYLFVQISVDPVAL). A propeptide spanning residues 24–266 (DGSSQPTENT…VTDTPKRSRR (243 aa)) is cleaved from the precursor. A glycan (N-linked (GlcNAc...) asparagine) is linked at Asn-71. Cystine bridges form between Cys-272/Cys-282, Cys-281/Cys-340, Cys-309/Cys-372, and Cys-313/Cys-374.

It belongs to the TGF-beta family. In terms of assembly, homodimer; disulfide-linked.

Its subcellular location is the secreted. Acts specifically as a negative regulator of skeletal muscle growth. The protein is Growth/differentiation factor 8 (MSTN) of Excalfactoria chinensis (Blue-breasted quail).